We begin with the raw amino-acid sequence, 418 residues long: L-rhamnose isomerase (418 aa).

Mn(2+) contacts are provided by H262, D294, and D296.

Belongs to the rhamnose isomerase family. As to quaternary structure, homotetramer. Requires Mn(2+) as cofactor.

The protein resides in the cytoplasm. It catalyses the reaction L-rhamnopyranose = L-rhamnulose. Its pathway is carbohydrate degradation; L-rhamnose degradation; glycerone phosphate from L-rhamnose: step 1/3. In terms of biological role, catalyzes the interconversion of L-rhamnose and L-rhamnulose. This Yersinia pseudotuberculosis serotype O:1b (strain IP 31758) protein is L-rhamnose isomerase.